The sequence spans 293 residues: Protease HtpX (293 aa).

The next 2 helical transmembrane spans lie at 4–24 (IALF…VLSL) and 34–54 (GLLI…LLMS). Histidine 139 serves as a coordination point for Zn(2+). The active site involves glutamate 140. Residue histidine 143 coordinates Zn(2+). Helical transmembrane passes span 158–178 (VVNT…AGFL) and 193–213 (LIYF…ASII). A Zn(2+)-binding site is contributed by glutamate 222.

The protein belongs to the peptidase M48B family. The cofactor is Zn(2+).

The protein resides in the cell inner membrane. The sequence is that of Protease HtpX from Salmonella agona (strain SL483).